Here is a 64-residue protein sequence, read N- to C-terminus: MLIIPIKDGENIDRALKRYKRKFDKTGTVRQLRARTAFIKPSVVKRAQIQKAAYIQTLKDSLES.

The protein belongs to the bacterial ribosomal protein bS21 family.

This chain is Small ribosomal subunit protein bS21, found in Flavobacterium johnsoniae (strain ATCC 17061 / DSM 2064 / JCM 8514 / BCRC 14874 / CCUG 350202 / NBRC 14942 / NCIMB 11054 / UW101) (Cytophaga johnsonae).